Here is a 374-residue protein sequence, read N- to C-terminus: Guanine nucleotide-binding protein subunit alpha-15 (374 aa).

Residues glycine 41 to leucine 374 form the G-alpha domain. Residues lysine 44–threonine 57 form a G1 motif region. GTP-binding positions include glycine 49–serine 56, leucine 183–threonine 189, aspartate 208–glutamine 212, asparagine 277–aspartate 280, and alanine 346. Mg(2+) contacts are provided by serine 56 and threonine 189. Residues aspartate 181 to threonine 189 are G2 motif. The segment at leucine 204 to lysine 213 is G3 motif. Residues isoleucine 273–aspartate 280 form a G4 motif region. The tract at residues threonine 344–threonine 349 is G5 motif.

Belongs to the G-alpha family. G(q) subfamily. In terms of assembly, g proteins are composed of 3 units; alpha, beta and gamma. The alpha chain contains the guanine nucleotide binding site.

In terms of biological role, guanine nucleotide-binding proteins (G proteins) are involved as modulators or transducers in various transmembrane signaling systems. The chain is Guanine nucleotide-binding protein subunit alpha-15 (Gna15) from Rattus norvegicus (Rat).